Here is a 176-residue protein sequence, read N- to C-terminus: ATP-dependent protease subunit HslV (176 aa).

T2 is a catalytic residue. Residues G157, C160, and T163 each coordinate Na(+).

It belongs to the peptidase T1B family. HslV subfamily. In terms of assembly, a double ring-shaped homohexamer of HslV is capped on each side by a ring-shaped HslU homohexamer. The assembly of the HslU/HslV complex is dependent on binding of ATP.

The protein resides in the cytoplasm. It catalyses the reaction ATP-dependent cleavage of peptide bonds with broad specificity.. Allosterically activated by HslU binding. Functionally, protease subunit of a proteasome-like degradation complex believed to be a general protein degrading machinery. The chain is ATP-dependent protease subunit HslV from Pseudomonas fluorescens (strain ATCC BAA-477 / NRRL B-23932 / Pf-5).